The following is a 547-amino-acid chain: Probable protein kinase UbiB (547 aa).

Residues Glu-121–Arg-501 enclose the Protein kinase domain. Residues Met-127–Val-135 and Lys-149 contribute to the ATP site. Asp-284 (proton acceptor) is an active-site residue. 2 helical membrane passes run Gly-502–Gln-522 and Trp-523–Leu-543.

The protein belongs to the ABC1 family. UbiB subfamily.

The protein localises to the cell inner membrane. It participates in cofactor biosynthesis; ubiquinone biosynthesis [regulation]. Its function is as follows. Is probably a protein kinase regulator of UbiI activity which is involved in aerobic coenzyme Q (ubiquinone) biosynthesis. The sequence is that of Probable protein kinase UbiB from Marinobacter nauticus (strain ATCC 700491 / DSM 11845 / VT8) (Marinobacter aquaeolei).